Here is a 328-residue protein sequence, read N- to C-terminus: tRNA dimethylallyltransferase (328 aa).

Residue 23-30 (GPTASGKS) participates in ATP binding. Residue 25–30 (TASGKS) coordinates substrate. Positions 48–51 (DSMQ) are interaction with substrate tRNA.

Belongs to the IPP transferase family. In terms of assembly, monomer. Requires Mg(2+) as cofactor.

The enzyme catalyses adenosine(37) in tRNA + dimethylallyl diphosphate = N(6)-dimethylallyladenosine(37) in tRNA + diphosphate. Catalyzes the transfer of a dimethylallyl group onto the adenine at position 37 in tRNAs that read codons beginning with uridine, leading to the formation of N6-(dimethylallyl)adenosine (i(6)A). The polypeptide is tRNA dimethylallyltransferase (Rhodopseudomonas palustris (strain BisA53)).